We begin with the raw amino-acid sequence, 319 residues long: Annexin A4 (319 aa).

Thr7 carries the phosphothreonine modification. Position 12 is a phosphoserine (Ser12). Annexin repeat units follow at residues 14–85 (FNAT…GLMT), 86–157 (PTVL…SLSA), 169–241 (ALMK…AIVK), and 245–316 (SKPS…VLCG). 3 positions are modified to N6-acetyllysine: Lys213, Lys293, and Lys300.

The protein belongs to the annexin family.

Its subcellular location is the zymogen granule membrane. Calcium/phospholipid-binding protein which promotes membrane fusion and is involved in exocytosis. This Mus musculus (Mouse) protein is Annexin A4 (Anxa4).